The chain runs to 277 residues: MNTQCLHLNYALVEDILLAFIRNEIRKFGFRSAVFGLSGGIDSAVVCELAKRALGPENVLAVLMPYRTSSPESVNDARLMVEKTGVRSEEVEITGVVDAFFDGVSGAGNLRMGNVMARARMLYLYDISARDGRLVIGTSNKTELLLGYGTLFGDMASAVNPIGDLYKTQLWGLARHLQIPEELVSKIPSADLWEGQSDEADLGFGYGEVDLLLYMMLEKRMSRSDIIEAGIEESFYDKVRKMVVRNQYKRMMPVIAKISARTPGIDFRYARDWQEVK.

36–43 is a binding site for ATP; sequence GLSGGIDS. Mg(2+) is bound at residue aspartate 42. Arginine 118 is a deamido-NAD(+) binding site. Threonine 138 is a binding site for ATP. Glutamate 143 contributes to the Mg(2+) binding site. Lysine 167 and serine 189 together coordinate ATP.

The protein belongs to the NAD synthetase family. As to quaternary structure, homodimer.

The catalysed reaction is deamido-NAD(+) + NH4(+) + ATP = AMP + diphosphate + NAD(+) + H(+). It functions in the pathway cofactor biosynthesis; NAD(+) biosynthesis; NAD(+) from deamido-NAD(+) (ammonia route): step 1/1. Catalyzes the ATP-dependent amidation of deamido-NAD to form NAD. Uses ammonia as a nitrogen source. In Chlorobium phaeobacteroides (strain BS1), this protein is NH(3)-dependent NAD(+) synthetase.